We begin with the raw amino-acid sequence, 140 residues long: Small ribosomal subunit protein uS19 (140 aa).

The protein belongs to the universal ribosomal protein uS19 family.

In terms of biological role, protein S19 forms a complex with S13 that binds strongly to the 16S ribosomal RNA. The polypeptide is Small ribosomal subunit protein uS19 (Sulfolobus acidocaldarius (strain ATCC 33909 / DSM 639 / JCM 8929 / NBRC 15157 / NCIMB 11770)).